The following is a 100-amino-acid chain: Urease subunit gamma (100 aa).

This sequence belongs to the urease gamma subunit family. As to quaternary structure, heterotrimer of UreA (gamma), UreB (beta) and UreC (alpha) subunits. Three heterotrimers associate to form the active enzyme.

The protein localises to the cytoplasm. It carries out the reaction urea + 2 H2O + H(+) = hydrogencarbonate + 2 NH4(+). It functions in the pathway nitrogen metabolism; urea degradation; CO(2) and NH(3) from urea (urease route): step 1/1. In Burkholderia thailandensis (strain ATCC 700388 / DSM 13276 / CCUG 48851 / CIP 106301 / E264), this protein is Urease subunit gamma.